Consider the following 132-residue polypeptide: uncharacterized protein (132 aa).

This is an uncharacterized protein from Homo sapiens (Human).